A 1176-amino-acid polypeptide reads, in one-letter code: MAERKGTAKVDFLKKIEKEIQQKWDTERVFEVNASNLEKQTSKGKYFVTFPYPYMNGRLHLGHTFSLSKCEFAVGYQRLKGKCCLFPFGLHCTGMPIKACADKLKREIELYGCPPDFPDEEEEEEETSVKTEDIIIKDKAKGKKSKAAAKAGSSKYQWGIMKSLGLSDEEIVKFSEAEHWLDYFPPLAIQDLKRMGLKVDWRRSFITTDVNPYYDSFVRWQFLTLRERNKIKFGKRYTIYSPKDGQPCMDHDRQTGEGVGPQEYTLLKLKVLEPYPSKLSGLKGKNIFLVAATLRPETMFGQTNCWVRPDMKYIGFETVNGDIFICTQKAARNMSYQGFTKDNGVVPVVKELMGEEILGASLSAPLTSYKVIYVLPMLTIKEDKGTGVVTSVPSDSPDDIAALRDLKKKQALRAKYGIRDDMVLPFEPVPVIEIPGFGNLSAVTICDELKIQSQNDREKLAEAKEKIYLKGFYEGIMLVDGFKGQKVQDVKKTIQKKMIDAGDALIYMEPEKQVMSRSSDECVVALCDQWYLDYGEENWKKQTSQCLKNLETFCEETRRNFEATLGWLQEHACSRTYGLGTHLPWDEQWLIESLSDSTIYMAFYTVAHLLQGGNLHGQAESPLGIRPQQMTKEVWDYVFFKEAPFPKTQIAKEKLDQLKQEFEFWYPVDLRVSGKDLVPNHLSYYLYNHVAMWPEQSDKWPTAVRANGHLLLNSEKMSKSTGNFLTLTQAIDKFSADGMRLALADAGDTVEDANFVEAMADAGILRLYTWVEWVKEMVANWDSLRSGPASTFNDRVFASELNAGIIKTDQNYEKMMFKEALKTGFFEFQAAKDKYRELAVEGMHRELVFRFIEVQTLLLAPFCPHLCEHIWTLLGKPDSIMNASWPVAGPVNEVLIHSSQYLMEVTHDLRLRLKNYMMPAKGKKTDKQPLQKPSHCTIYVAKNYPPWQHTTLSVLRKHFEANNGKLPDNKVIASELGSMPELKKYMKKVMPFVAMIKENLEKMGPRILDLQLEFDEKAVLMENIVYLTNSLELEHIEVKFASEAEDKIREDCCPGKPLNVFRIEPGVSVSLVNPQPSNGHFSTKIEIRQGDNCDSIIRRLMKMNRGIKDLSKVKLMRFDDPLLGPRRVPVLGKEYTEKTPISEHAVFNVDLMSKKIHLTENGIRVDIGDTIIYLVH.

Residues tyrosine 52 and tyrosine 54 each contribute to the L-leucine site. The 'HIGH' region signature appears at 60–63 (HLGH). A Phosphoserine modification is found at serine 167. Positions 260–509 (GPQEYTLLKL…DAGDALIYME (250 aa)) are editing domain. L-leucine-binding residues include leucine 594 and serine 597. The 'KMSKS' region signature appears at 716 to 720 (KMSKS). Lysine 719 is an ATP binding site. At serine 720 the chain carries Phosphoserine. N6-acetyllysine is present on residues lysine 970 and lysine 1047.

It belongs to the class-I aminoacyl-tRNA synthetase family. As to quaternary structure, part of the aminoacyl-tRNA synthetase multienzyme complex, also known as multisynthetase complex (MSC), that is composed of the aminoacyl-tRNA ligases for Arg (RARS1), Asp (DARS1), Gln (QARS1), Ile (IARS1), Leu (LARS1), Lys (KARS1), Met (MARS1) the bifunctional ligase for Glu and Pro (EPRS1) and the auxiliary subunits AIMP1/p43, AIMP2/p38 and EEF1E1/p18.

It is found in the cytoplasm. The enzyme catalyses tRNA(Leu) + L-leucine + ATP = L-leucyl-tRNA(Leu) + AMP + diphosphate. The catalysed reaction is L-methionyl-tRNA(Leu) + H2O = tRNA(Leu) + L-methionine + H(+). Its activity is regulated as follows. 5-fluoro-1,3-dihydro-1-hydroxy-1,2-benzoxaborole inhibits LARS1 by forming a covalent adduct with the 3' adenosine of tRNA(Leu) at the editing site, thus locking the enzyme in an inactive conformation. In terms of biological role, aminoacyl-tRNA synthetase that catalyzes the specific attachment of leucine to its cognate tRNA (tRNA(Leu)). It performs tRNA aminoacylation in a two-step reaction: Leu is initially activated by ATP to form a leucyl-adenylate (Leu-AMP) intermediate; then the leucyl moiety is transferred to the acceptor 3' end of the tRNA to yield leucyl-tRNA. To improve the fidelity of catalytic reactions, it is also able to hydrolyze misactivated aminoacyl-adenylate intermediates (pre-transfer editing) and mischarged aminoacyl-tRNAs (post-transfer editing). This Homo sapiens (Human) protein is Leucine--tRNA ligase, cytoplasmic.